A 240-amino-acid polypeptide reads, in one-letter code: Sec-independent protein translocase protein TatC (240 aa).

6 consecutive transmembrane segments (helical) span residues 15–35, 61–81, 103–123, 152–172, 191–211, and 212–232; these read IISIIAFLIGSGIAFYFAKYV, LFILIKISLAVGFIIASPVIL, LLLGSILLFMLGALFAYFIVL, FVLKLVVAFGIAFEMPIVLYV, FIVIAFVIGAIIAPDVSTQVL, and MAIPLLLLYEISIFLGKLATR.

The protein belongs to the TatC family. In terms of assembly, forms a complex with TatA.

The protein localises to the cell inner membrane. Functionally, part of the twin-arginine translocation (Tat) system that transports large folded proteins containing a characteristic twin-arginine motif in their signal peptide across membranes. The sequence is that of Sec-independent protein translocase protein TatC from Aquifex aeolicus (strain VF5).